The chain runs to 325 residues: Cytochrome c biogenesis protein CcsA (325 aa).

A run of 8 helical transmembrane segments spans residues 12-32 (HISF…LLFV), 45-65 (GMII…VFSG), 72-92 (LYES…VPYF), 100-120 (LNTI…SGLL), 145-165 (MILG…ILVI), 231-251 (TISL…VWAN), 264-281 (ETWA…LHTR), and 293-313 (IVAS…NLLG).

The protein belongs to the CcmF/CycK/Ccl1/NrfE/CcsA family. As to quaternary structure, may interact with Ccs1.

The protein resides in the plastid. It is found in the chloroplast thylakoid membrane. Its function is as follows. Required during biogenesis of c-type cytochromes (cytochrome c6 and cytochrome f) at the step of heme attachment. In Glycine max (Soybean), this protein is Cytochrome c biogenesis protein CcsA.